The primary structure comprises 2276 residues: Poly [ADP-ribose] polymerase tankyrase (2276 aa).

Basic residues-rich tracts occupy residues 1–15 (MARR…VKAA) and 87–98 (KAVKAPKVKAPS). 2 disordered regions span residues 1-20 (MARR…KIDG) and 79-103 (SSKT…KGND). ANK repeat units lie at residues 345-374 (KNIT…TINI), 378-407 (DNWY…SVTM), 411-440 (QTET…DLEK), 461-490 (SGNS…IVVD), 498-527 (NRLT…LVEG), 531-560 (KKRT…SLTL), 564-593 (SGNT…NILS), 598-627 (WQLY…KDKA), 675-725 (SGQT…KVDV), 729-758 (EDNT…NKRN), 970-999 (KDDV…EMHL), 1171-1200 (NGNT…HVDL), 1204-1233 (DGNT…DVTE), 1472-1501 (GLIP…SLKT), and 1505-1535 (YGRT…AVVL). The segment at 1570 to 1649 (VPARVESDEE…STGPKRKKLV (80 aa)) is disordered. Composition is skewed to acidic residues over residues 1576–1590 (SDEE…ESGE) and 1612–1622 (SDDEDDDDDDS). The ANK 16 repeat unit spans residues 1662–1706 (KENNPLHYFIEPLAWENVELLGDLAAANKTAIVQCLIDKRSPNPI). Residues 1788–1889 (GLVSFCDETQ…ANFRDMPKKY (102 aa)) enclose the WGR domain. One can recognise a PARP alpha-helical domain in the interval 1910–2045 (KNTEKDPIRR…EIETATRLLC (136 aa)). A PARP catalytic domain is found at 2047 to 2276 (AEFRQDLDRV…VLPKYIVMYK (230 aa)).

As to expression, expressed throughout the head and tail, in germ cells and somatic cells.

It is found in the nucleus. The protein localises to the chromosome. It catalyses the reaction NAD(+) + (ADP-D-ribosyl)n-acceptor = nicotinamide + (ADP-D-ribosyl)n+1-acceptor + H(+).. The catalysed reaction is L-aspartyl-[protein] + NAD(+) = 4-O-(ADP-D-ribosyl)-L-aspartyl-[protein] + nicotinamide. It carries out the reaction L-glutamyl-[protein] + NAD(+) = 5-O-(ADP-D-ribosyl)-L-glutamyl-[protein] + nicotinamide. In terms of biological role, poly[ADP-ribose] polymerases modify various nuclear proteins by poly(ADP-ribosyl)ation, a post-translational modification synthesized after DNA damage that appears as an obligatory step in a detection/signaling pathway leading to the reparation of DNA strand breaks and programmed cell death. The polypeptide is Poly [ADP-ribose] polymerase tankyrase (Caenorhabditis elegans).